The sequence spans 154 residues: Ribonuclease 8 (154 aa).

A signal peptide spans 1–27 (MAPARAGCCPLLLLLLGLWVAQIPVSA). The Proton acceptor role is filled by His42. Intrachain disulfides connect Cys64-Cys118 and Cys89-Cys96. Substrate-binding positions include 65-69 (KDLNT) and Lys90. The Proton donor role is filled by His149.

This sequence belongs to the pancreatic ribonuclease family.

The protein localises to the secreted. Its function is as follows. Has a low ribonuclease activity. In Chlorocebus aethiops (Green monkey), this protein is Ribonuclease 8 (RNASE8).